The primary structure comprises 369 residues: MHGESPIKRRESRKIWVGNVPVGGDAPIAVQSMTNTDTNDVAATVAQIQRLVDAGVDIVRVSVPDMDAAEAFGKIKQRVSVPLVADIHFDYKIALRVAELGVDCLRINPGNIGREDRVRAVVDAARDRGIPIRIGVNAGSLEKDLQKKYGEPTPAALVESALRHVEHLDRLDFQDFKVSVKASDVFMAVEAYRLLAKQIVQPLHLGITEAGGLRSGTVKSAVGLGMLLAEGIGDTIRISLAADPVEEVKVGYDILKSLHLRSRGINFIACPSCSRQNFDVVKTMNELEGRLEDLLVPLDVAVIGCVVNGPGEAKEAHVGLTGGTPNLIYIDGKPAQKLTNDNLVDELEKLIRQKAAEKAEADAALIVRG.

The [4Fe-4S] cluster site is built by cysteine 270, cysteine 273, cysteine 305, and glutamate 312.

It belongs to the IspG family. The cofactor is [4Fe-4S] cluster.

It carries out the reaction (2E)-4-hydroxy-3-methylbut-2-enyl diphosphate + oxidized [flavodoxin] + H2O + 2 H(+) = 2-C-methyl-D-erythritol 2,4-cyclic diphosphate + reduced [flavodoxin]. The protein operates within isoprenoid biosynthesis; isopentenyl diphosphate biosynthesis via DXP pathway; isopentenyl diphosphate from 1-deoxy-D-xylulose 5-phosphate: step 5/6. Its function is as follows. Converts 2C-methyl-D-erythritol 2,4-cyclodiphosphate (ME-2,4cPP) into 1-hydroxy-2-methyl-2-(E)-butenyl 4-diphosphate. The sequence is that of 4-hydroxy-3-methylbut-2-en-1-yl diphosphate synthase (flavodoxin) from Pseudomonas putida (strain ATCC 700007 / DSM 6899 / JCM 31910 / BCRC 17059 / LMG 24140 / F1).